The sequence spans 967 residues: Serine/threonine-protein kinase 10 (967 aa).

A phosphoserine mark is found at Ser13 and Ser20. The 259-residue stretch at 36 to 294 folds into the Protein kinase domain; that stretch reads WEILGELGDG…AAQLLQHPFV (259 aa). ATP-binding positions include 42–50 and Lys65; that span reads LGDGAFGKV. Asp157 functions as the Proton acceptor in the catalytic mechanism. Positions 175 to 224 are activation segment; it reads DFGVSAKNLKTLQKRDSFIGTPYWMAPEVVLCETMKDAPYDYKADIWSLG. At Thr185 the chain carries Phosphothreonine; by autocatalysis. Ser191 bears the Phosphoserine; by autocatalysis mark. 2 disordered regions span residues 317-454 and 468-498; these read EIED…RPNS and GGLE…SMDY. Composition is skewed to polar residues over residues 339 to 364, 378 to 393, and 431 to 454; these read NHTQ…DSST, PCNQ…NTSP, and TDQA…RPNS. Residues Ser438, Ser450, Ser454, and Ser485 each carry the phosphoserine modification. Residues 486–498 are compositionally biased toward polar residues; the sequence is DCSNLSTSESMDY. Phosphoserine is present on residues Ser514 and Ser549. Disordered stretches follow at residues 827-866 and 902-967; these read INGA…ENQM and LDES…GDAS. Basic and acidic residues-rich tracts occupy residues 835–866 and 902–947; these read EQRE…ENQM and LDES…EAET. At Thr951 the chain carries Phosphothreonine.

It belongs to the protein kinase superfamily. STE Ser/Thr protein kinase family. STE20 subfamily. As to quaternary structure, homodimer; homodimerization is required for activation segment autophosphorylation. Post-translationally, autophosphorylates following homodimerization, leading to activation of the protein.

It localises to the cell membrane. It catalyses the reaction L-seryl-[protein] + ATP = O-phospho-L-seryl-[protein] + ADP + H(+). The enzyme catalyses L-threonyl-[protein] + ATP = O-phospho-L-threonyl-[protein] + ADP + H(+). Inhibited by the pyrrole-indolinone inhibitor SU11274 (K00593): intercalates between the ATP-binding Lys-65 and alpha-C glutamate (Glu-81), resulting in a partial disordering of the lysine side chain. Also specifically inhibited by erlotinib. Slightly inhibited by gefitinib. Its function is as follows. Serine/threonine-protein kinase involved in regulation of lymphocyte migration. Phosphorylates MSN, and possibly PLK1. Involved in regulation of lymphocyte migration by mediating phosphorylation of ERM proteins such as MSN. Acts as a negative regulator of MAP3K1/MEKK1. May also act as a cell cycle regulator by acting as a polo kinase kinase: mediates phosphorylation of PLK1 in vitro; however such data require additional evidences in vivo. The chain is Serine/threonine-protein kinase 10 (Stk10) from Rattus norvegicus (Rat).